A 246-amino-acid polypeptide reads, in one-letter code: Pyridoxine 5'-phosphate synthase (246 aa).

3-amino-2-oxopropyl phosphate is bound at residue asparagine 12. Position 14 to 15 (14 to 15 (DH)) interacts with 1-deoxy-D-xylulose 5-phosphate. 3-amino-2-oxopropyl phosphate is bound at residue arginine 23. The active-site Proton acceptor is histidine 48. 1-deoxy-D-xylulose 5-phosphate is bound by residues arginine 50 and histidine 55. Catalysis depends on glutamate 75, which acts as the Proton acceptor. Threonine 105 is a binding site for 1-deoxy-D-xylulose 5-phosphate. The Proton donor role is filled by histidine 196. 3-amino-2-oxopropyl phosphate-binding positions include glycine 197 and 218–219 (GH).

Belongs to the PNP synthase family. In terms of assembly, homooctamer; tetramer of dimers.

Its subcellular location is the cytoplasm. It catalyses the reaction 3-amino-2-oxopropyl phosphate + 1-deoxy-D-xylulose 5-phosphate = pyridoxine 5'-phosphate + phosphate + 2 H2O + H(+). Its pathway is cofactor biosynthesis; pyridoxine 5'-phosphate biosynthesis; pyridoxine 5'-phosphate from D-erythrose 4-phosphate: step 5/5. Functionally, catalyzes the complicated ring closure reaction between the two acyclic compounds 1-deoxy-D-xylulose-5-phosphate (DXP) and 3-amino-2-oxopropyl phosphate (1-amino-acetone-3-phosphate or AAP) to form pyridoxine 5'-phosphate (PNP) and inorganic phosphate. In Pseudomonas syringae pv. syringae (strain B728a), this protein is Pyridoxine 5'-phosphate synthase.